Reading from the N-terminus, the 602-residue chain is Zinc finger MYND domain-containing protein 11 (602 aa).

The region spanning 6 to 82 (KRRQADTKAI…CKGSKAGIEQ (77 aa)) is the SAMD1-like winged helix (WH) domain. The PHD-type zinc-finger motif lies at 100 to 148 (DWYCFECHLPGEVLICDLCFRVYHSKCLSDEFRLRDSSSPWQCPVCRSI). In terms of domain architecture, Bromo spans 149-255 (KKKNTNKQEM…KDTCHELDEL (107 aa)). Zn(2+) is bound by residues Cys258, Cys261, Cys277, and His281. The region spanning 280–331 (NHELVWAKMKGFGFWPAKVMQKEDNQVDVRFFGHHHQRAWIPSENIQDITVN) is the PWWP domain. Lys366 is covalently cross-linked (Glycyl lysine isopeptide (Lys-Gly) (interchain with G-Cter in SUMO2)). The disordered stretch occupies residues 366–459 (KNEDRGEEEA…MLHRSTQTTN (94 aa)). The short motif at 394-400 (RAKKGRR) is the Nuclear localization signal element. Residues Lys407 and Lys408 each participate in a glycyl lysine isopeptide (Lys-Gly) (interchain with G-Cter in SUMO2) cross-link. Ser421 is modified (phosphoserine). The segment covering 435–459 (SVSTQTKKLSASSPRMLHRSTQTTN) has biased composition (polar residues). Residues 452–572 (HRSTQTTNDG…CYNCEEEAMY (121 aa)) are interaction with human adenovirus E1A. Residues Cys563, Cys566, Cys574, Cys575, Cys581, Cys585, His594, and Cys598 each contribute to the Zn(2+) site. The MYND-type zinc finger occupies 563 to 598 (CYNCEEEAMYHCCWNTSYCSIKCQQEHWHAEHKRTC).

As to quaternary structure, homooligomer; forms homooligomers via its C-terminus. Interacts with histone H3.3 trimethylated at 'Lys-36' (H3.3K36me3). Interacts (via MYND-type zinc finger) with NCOR1. Interacts (via MYND-type zinc finger) with MGA protein (via PXLXP motif). Interacts (via MYND-type zinc finger) with EZH2. Interacts with EMSY and E2F6. Interacts with PIAS1 and UBE2I. In terms of assembly, (Microbial infection) Interacts (via MYND-type zinc finger) with human adenovirus early E1A protein (via PXLXP motif); this interaction inhibits E1A mediated transactivation. (Microbial infection) Interacts (via MYND-type zinc finger) with Epstein-Barr virus EBNA2 protein (via PXLXP motif). Interacts with Epstein-Barr virus-derived protein LMP1; leading to negatively regulate NF-kappa-B activation by Epstein-Barr virus-derived protein LMP1. Post-translationally, sumoylated following its interaction with PIAS1 and UBE2I. In terms of processing, ubiquitinated, leading to proteasomal degradation. As to expression, ubiquitous.

The protein resides in the nucleus. It is found in the chromosome. Functionally, chromatin reader that specifically recognizes and binds histone H3.3 trimethylated at 'Lys-36' (H3.3K36me3) and regulates RNA polymerase II elongation. Does not bind other histone H3 subtypes (H3.1 or H3.2). Colocalizes with highly expressed genes and functions as a transcription corepressor by modulating RNA polymerase II at the elongation stage. Binds non-specifically to dsDNA. Acts as a tumor-suppressor by repressing a transcriptional program essential for tumor cell growth. In terms of biological role, (Microbial infection) Inhibits Epstein-Barr virus EBNA2-mediated transcriptional activation and host cell proliferation, through direct interaction. The chain is Zinc finger MYND domain-containing protein 11 from Homo sapiens (Human).